Consider the following 489-residue polypeptide: Glycogen synthase (489 aa).

K17 lines the ADP-alpha-D-glucose pocket.

The protein belongs to the glycosyltransferase 1 family. Bacterial/plant glycogen synthase subfamily.

It carries out the reaction [(1-&gt;4)-alpha-D-glucosyl](n) + ADP-alpha-D-glucose = [(1-&gt;4)-alpha-D-glucosyl](n+1) + ADP + H(+). Its pathway is glycan biosynthesis; glycogen biosynthesis. Synthesizes alpha-1,4-glucan chains using ADP-glucose. The polypeptide is Glycogen synthase (Nitratidesulfovibrio vulgaris (strain ATCC 29579 / DSM 644 / CCUG 34227 / NCIMB 8303 / VKM B-1760 / Hildenborough) (Desulfovibrio vulgaris)).